The sequence spans 180 residues: Large ribosomal subunit protein uL5 (180 aa).

This sequence belongs to the universal ribosomal protein uL5 family. As to quaternary structure, part of the 50S ribosomal subunit; part of the 5S rRNA/L5/L18/L25 subcomplex. Contacts the 5S rRNA and the P site tRNA. Forms a bridge to the 30S subunit in the 70S ribosome.

In terms of biological role, this is one of the proteins that bind and probably mediate the attachment of the 5S RNA into the large ribosomal subunit, where it forms part of the central protuberance. In the 70S ribosome it contacts protein S13 of the 30S subunit (bridge B1b), connecting the 2 subunits; this bridge is implicated in subunit movement. Contacts the P site tRNA; the 5S rRNA and some of its associated proteins might help stabilize positioning of ribosome-bound tRNAs. The sequence is that of Large ribosomal subunit protein uL5 from Streptococcus thermophilus (strain ATCC BAA-491 / LMD-9).